A 277-amino-acid chain; its full sequence is Undecaprenyl-diphosphatase 2 (277 aa).

6 helical membrane-spanning segments follow: residues 43-63 (RAMA…VWEF), 87-107 (LLIA…TIHE), 109-129 (LFNP…MLWA), 183-203 (AATE…AVYS), 214-234 (SDLP…MIAV), and 254-274 (IAFG…WTAA).

This sequence belongs to the UppP family.

It is found in the cell inner membrane. It carries out the reaction di-trans,octa-cis-undecaprenyl diphosphate + H2O = di-trans,octa-cis-undecaprenyl phosphate + phosphate + H(+). Catalyzes the dephosphorylation of undecaprenyl diphosphate (UPP). Confers resistance to bacitracin. The sequence is that of Undecaprenyl-diphosphatase 2 from Pseudomonas fluorescens (strain Pf0-1).